The following is a 215-amino-acid chain: Ribonuclease T (215 aa).

The region spanning 20–194 (VVIDVETAGF…YDTERTAVLF (175 aa)) is the Exonuclease domain. Asp-23, Glu-25, His-181, and Asp-186 together coordinate Mg(2+). Catalysis depends on His-181, which acts as the Proton donor/acceptor.

It belongs to the RNase T family. In terms of assembly, homodimer. Requires Mg(2+) as cofactor.

Functionally, trims short 3' overhangs of a variety of RNA species, leaving a one or two nucleotide 3' overhang. Responsible for the end-turnover of tRNA: specifically removes the terminal AMP residue from uncharged tRNA (tRNA-C-C-A). Also appears to be involved in tRNA biosynthesis. This chain is Ribonuclease T, found in Salmonella choleraesuis (strain SC-B67).